We begin with the raw amino-acid sequence, 1064 residues long: Fibropellin-1 (1064 aa).

Positions 1–19 (MRTWLLAVLLLSVIAVTYG) are cleaved as a signal peptide. The 36-residue stretch at 20 to 55 (QGECDSDPCENGSTCQEGEGSYICQCPMGYDGQNCD) folds into the EGF-like 1 domain. 4 disulfide bridges follow: C23–C34, C28–C43, C45–C54, and C62–C88. N-linked (GlcNAc...) asparagine glycosylation occurs at N30. In terms of domain architecture, CUB spans 62–175 (CGYNVFDANG…NRGFRITFSS (114 aa)). N136 carries an N-linked (GlcNAc...) asparagine glycan. Residues 176–212 (DGDDCDPNLCQNGAACTDLVNDYACTCPPGFTGRNCE) enclose the EGF-like 2; calcium-binding domain. 61 cysteine pairs are disulfide-bonded: C180–C191, C185–C200, C202–C211, C218–C229, C223–C238, C240–C249, C256–C267, C261–C276, C278–C287, C294–C305, C299–C314, C316–C325, C332–C343, C337–C352, C354–C363, C370–C381, C375–C390, C392–C401, C408–C419, C413–C428, C430–C439, C446–C457, C451–C466, C468–C477, C484–C495, C489–C504, C506–C515, C522–C533, C527–C542, C544–C553, C560–C571, C565–C580, C582–C591, C598–C609, C603–C618, C620–C629, C636–C647, C641–C656, C658–C667, C674–C685, C679–C694, C696–C705, C712–C723, C717–C732, C734–C743, C750–C761, C755–C770, C772–C781, C788–C799, C793–C808, C810–C819, C826–C837, C831–C846, C848–C857, C864–C875, C869–C884, C886–C895, C902–C913, C907–C922, C924–C933, and C939–C1015. Residues 214–250 (DIDECASDPCQNGGACVDGVNGYVCNCVPGFDGDECE) form the EGF-like 3; calcium-binding domain. In terms of domain architecture, EGF-like 4; calcium-binding spans 252–288 (NINECASSPCLNGGICVDGVNMFECTCLAGFTGVRCE). The 37-residue stretch at 290-326 (NIDECASAPCQNGGICIDGINGYTCSCPLGFSGDNCE) folds into the EGF-like 5; calcium-binding domain. Residues 328–364 (NDDECSSIPCLNGGTCVDLVNAYMCVCAPGWTGPTCA) form the EGF-like 6; calcium-binding domain. In terms of domain architecture, EGF-like 7; calcium-binding spans 366 to 402 (NIDECASAPCQNGGVCIDGVNGYMCDCQPGYTGTHCE). In terms of domain architecture, EGF-like 8; calcium-binding spans 404–440 (DIDECARPPCQNGGDCVDGVNGYVCICAPGFDGLNCE). Residues 442 to 478 (NIDECASRPCQNGAVCVDGVNGFVCTCSAGYTGVLCE) form the EGF-like 9; calcium-binding domain. An EGF-like 10; calcium-binding domain is found at 480-516 (DINECASMPCLNGGVCTDLVNGYICTCAAGFEGTNCE). One can recognise an EGF-like 11; calcium-binding domain in the interval 518–554 (DTDECASFPCQNGATCTDQVNGYVCTCVPGYTGVLCE). The region spanning 556 to 592 (DINECASFPCLNGGTCNDQVNGYVCVCAQDTSVSTCE) is the EGF-like 12; calcium-binding domain. Residues 594–630 (DRDECASAPCLNGGACMDVVNGFVCTCLPGWEGTNCE) form the EGF-like 13; calcium-binding domain. The 37-residue stretch at 632–668 (NTDECASSPCMNGGLCVDQVNSYVCFCLPGFTGIHCG) folds into the EGF-like 14; calcium-binding domain. Positions 670–706 (EIDECASSPCLNGGQCIDRVDSYECVCAAGYTAVRCQ) constitute an EGF-like 15; calcium-binding domain. The EGF-like 16; calcium-binding domain occupies 708–744 (NIDECASAPCQNGGVCVDGVNGYVCNCAPGYTGDNCE). The EGF-like 17; calcium-binding domain maps to 746–782 (EIDECASMPCLNGGACIEMVNGYTCQCVAGYTGVICE). The EGF-like 18; calcium-binding domain maps to 784 to 820 (DIDECASAPCQNGGVCTDTINGYICACVPGFTGSNCE). Positions 822 to 858 (NIDECASDPCLNGGICVDGVNGFVCQCPPNYSGTYCE) constitute an EGF-like 19; calcium-binding domain. An N-linked (GlcNAc...) asparagine glycan is attached at N851. One can recognise an EGF-like 20 domain in the interval 860-896 (SLDACRSMPCQNGATCVNVGADYVCECVPGYAGQNCE). Positions 898 to 934 (DINECASLPCQNGGLCIDGIAGYTCQCRLGYIGVNCE) constitute an EGF-like 21; calcium-binding domain. An Avidin-like domain is found at 937–1056 (GFCDLEGMWY…GQDKWTRYEQ (120 aa)).

In terms of assembly, homotetramer.

It localises to the secreted. It is found in the extracellular space. The protein localises to the cytoplasmic vesicle. The protein resides in the extracellular matrix. Its subcellular location is the hyaline layer. It localises to the apical lamina. Its function is as follows. Forms the apical lamina, a component of the extracellular matrix. The chain is Fibropellin-1 (EGF1) from Strongylocentrotus purpuratus (Purple sea urchin).